An 86-amino-acid polypeptide reads, in one-letter code: UPF0297 protein SH1302 (86 aa).

The protein belongs to the UPF0297 family.

The protein is UPF0297 protein SH1302 of Staphylococcus haemolyticus (strain JCSC1435).